The chain runs to 426 residues: Serine--tRNA ligase (426 aa).

235-237 (TAE) contributes to the L-serine binding site. Residues 266–268 (RRE) and Val-282 each bind ATP. L-serine is bound at residue Glu-289. 353–356 (EASS) contributes to the ATP binding site. Ser-389 serves as a coordination point for L-serine.

Belongs to the class-II aminoacyl-tRNA synthetase family. Type-1 seryl-tRNA synthetase subfamily. Homodimer. The tRNA molecule binds across the dimer.

The protein resides in the cytoplasm. It catalyses the reaction tRNA(Ser) + L-serine + ATP = L-seryl-tRNA(Ser) + AMP + diphosphate + H(+). The enzyme catalyses tRNA(Sec) + L-serine + ATP = L-seryl-tRNA(Sec) + AMP + diphosphate + H(+). The protein operates within aminoacyl-tRNA biosynthesis; selenocysteinyl-tRNA(Sec) biosynthesis; L-seryl-tRNA(Sec) from L-serine and tRNA(Sec): step 1/1. Catalyzes the attachment of serine to tRNA(Ser). Is also able to aminoacylate tRNA(Sec) with serine, to form the misacylated tRNA L-seryl-tRNA(Sec), which will be further converted into selenocysteinyl-tRNA(Sec). This Chlorobium chlorochromatii (strain CaD3) protein is Serine--tRNA ligase.